A 189-amino-acid chain; its full sequence is Isopentenyl-diphosphate Delta-isomerase 2 (189 aa).

Residues His-24 and His-30 each coordinate Mn(2+). Residues 28–160 (ALHRAISIFV…PETYSFWLAA (133 aa)) enclose the Nudix hydrolase domain. Cys-65 is a catalytic residue. Mg(2+) is bound at residue Cys-65. His-67 contacts Mn(2+). Residue Glu-85 participates in Mg(2+) binding. Residues Glu-110 and Glu-112 each contribute to the Mn(2+) site. The active site involves Glu-112.

It belongs to the IPP isomerase type 1 family. Mg(2+) is required as a cofactor. The cofactor is Mn(2+).

The protein resides in the cytoplasm. It carries out the reaction isopentenyl diphosphate = dimethylallyl diphosphate. Its pathway is isoprenoid biosynthesis; dimethylallyl diphosphate biosynthesis; dimethylallyl diphosphate from isopentenyl diphosphate: step 1/1. Catalyzes the 1,3-allylic rearrangement of the homoallylic substrate isopentenyl (IPP) to its highly electrophilic allylic isomer, dimethylallyl diphosphate (DMAPP). In Aromatoleum aromaticum (strain DSM 19018 / LMG 30748 / EbN1) (Azoarcus sp. (strain EbN1)), this protein is Isopentenyl-diphosphate Delta-isomerase 2.